A 331-amino-acid polypeptide reads, in one-letter code: Pantothenate kinase (331 aa).

109-116 (GSVAVGKS) lines the ATP pocket.

The protein belongs to the prokaryotic pantothenate kinase family.

It is found in the cytoplasm. The catalysed reaction is (R)-pantothenate + ATP = (R)-4'-phosphopantothenate + ADP + H(+). Its pathway is cofactor biosynthesis; coenzyme A biosynthesis; CoA from (R)-pantothenate: step 1/5. The sequence is that of Pantothenate kinase from Sinorhizobium medicae (strain WSM419) (Ensifer medicae).